We begin with the raw amino-acid sequence, 227 residues long: Cytochrome c oxidase subunit 2 (227 aa).

The Mitochondrial intermembrane portion of the chain corresponds to 1–14 (MAYPFQLGLQDATS). The helical transmembrane segment at 15–45 (PIMEELMNFHDHTLMIVFLISSLVLYIISLM) threads the bilayer. Residues 46–59 (LTTKLTHTSTMDAQ) lie on the Mitochondrial matrix side of the membrane. A helical membrane pass occupies residues 60 to 87 (EVETIWTILPAAILILIALPSLRILYMM). The Mitochondrial intermembrane segment spans residues 88-227 (DEINNPALTV…YFENWSASMI (140 aa)). The Cu cation site is built by His161, Cys196, Glu198, Cys200, His204, and Met207. Glu198 lines the Mg(2+) pocket. The residue at position 218 (Tyr218) is a Phosphotyrosine.

This sequence belongs to the cytochrome c oxidase subunit 2 family. In terms of assembly, component of the cytochrome c oxidase (complex IV, CIV), a multisubunit enzyme composed of 14 subunits. The complex is composed of a catalytic core of 3 subunits MT-CO1, MT-CO2 and MT-CO3, encoded in the mitochondrial DNA, and 11 supernumerary subunits COX4I, COX5A, COX5B, COX6A, COX6B, COX6C, COX7A, COX7B, COX7C, COX8 and NDUFA4, which are encoded in the nuclear genome. The complex exists as a monomer or a dimer and forms supercomplexes (SCs) in the inner mitochondrial membrane with NADH-ubiquinone oxidoreductase (complex I, CI) and ubiquinol-cytochrome c oxidoreductase (cytochrome b-c1 complex, complex III, CIII), resulting in different assemblies (supercomplex SCI(1)III(2)IV(1) and megacomplex MCI(2)III(2)IV(2)). Found in a complex with TMEM177, COA6, COX18, COX20, SCO1 and SCO2. Interacts with TMEM177 in a COX20-dependent manner. Interacts with COX20. Interacts with COX16. Requires Cu cation as cofactor.

Its subcellular location is the mitochondrion inner membrane. It carries out the reaction 4 Fe(II)-[cytochrome c] + O2 + 8 H(+)(in) = 4 Fe(III)-[cytochrome c] + 2 H2O + 4 H(+)(out). Its function is as follows. Component of the cytochrome c oxidase, the last enzyme in the mitochondrial electron transport chain which drives oxidative phosphorylation. The respiratory chain contains 3 multisubunit complexes succinate dehydrogenase (complex II, CII), ubiquinol-cytochrome c oxidoreductase (cytochrome b-c1 complex, complex III, CIII) and cytochrome c oxidase (complex IV, CIV), that cooperate to transfer electrons derived from NADH and succinate to molecular oxygen, creating an electrochemical gradient over the inner membrane that drives transmembrane transport and the ATP synthase. Cytochrome c oxidase is the component of the respiratory chain that catalyzes the reduction of oxygen to water. Electrons originating from reduced cytochrome c in the intermembrane space (IMS) are transferred via the dinuclear copper A center (CU(A)) of subunit 2 and heme A of subunit 1 to the active site in subunit 1, a binuclear center (BNC) formed by heme A3 and copper B (CU(B)). The BNC reduces molecular oxygen to 2 water molecules using 4 electrons from cytochrome c in the IMS and 4 protons from the mitochondrial matrix. The chain is Cytochrome c oxidase subunit 2 (MT-CO2) from Lemniscomys barbarus (Barbary striped grass mouse).